The primary structure comprises 435 residues: 5-methylthioadenosine/S-adenosylhomocysteine deaminase (435 aa).

Zn(2+)-binding residues include His-65 and His-67. Glu-94, Arg-150, and His-189 together coordinate substrate. His-216 is a binding site for Zn(2+). Glu-219 and Asp-304 together coordinate substrate. Asp-304 lines the Zn(2+) pocket.

This sequence belongs to the metallo-dependent hydrolases superfamily. MTA/SAH deaminase family. The cofactor is Zn(2+).

The enzyme catalyses S-adenosyl-L-homocysteine + H2O + H(+) = S-inosyl-L-homocysteine + NH4(+). It catalyses the reaction S-methyl-5'-thioadenosine + H2O + H(+) = S-methyl-5'-thioinosine + NH4(+). In terms of biological role, catalyzes the deamination of 5-methylthioadenosine and S-adenosyl-L-homocysteine into 5-methylthioinosine and S-inosyl-L-homocysteine, respectively. Is also able to deaminate adenosine. In Bacillus thuringiensis (strain Al Hakam), this protein is 5-methylthioadenosine/S-adenosylhomocysteine deaminase.